The sequence spans 507 residues: 2,3-bisphosphoglycerate-independent phosphoglycerate mutase (507 aa).

Positions 11 and 61 each coordinate Mn(2+). Ser-61 acts as the Phosphoserine intermediate in catalysis. Residues His-122, 152–153 (RD), Arg-183, Arg-189, 258–261 (RNDR), and Lys-332 contribute to the substrate site. Mn(2+) contacts are provided by Asp-399, His-403, Asp-440, His-441, and His-458.

This sequence belongs to the BPG-independent phosphoglycerate mutase family. Monomer. The cofactor is Mn(2+).

It carries out the reaction (2R)-2-phosphoglycerate = (2R)-3-phosphoglycerate. The protein operates within carbohydrate degradation; glycolysis; pyruvate from D-glyceraldehyde 3-phosphate: step 3/5. In terms of biological role, catalyzes the interconversion of 2-phosphoglycerate and 3-phosphoglycerate. The polypeptide is 2,3-bisphosphoglycerate-independent phosphoglycerate mutase (Parabacteroides distasonis (strain ATCC 8503 / DSM 20701 / CIP 104284 / JCM 5825 / NCTC 11152)).